A 308-amino-acid polypeptide reads, in one-letter code: HPr kinase/phosphorylase (308 aa).

Catalysis depends on residues His-141 and Lys-162. 156-163 (GKSGVGKS) is an ATP binding site. Ser-163 provides a ligand contact to Mg(2+). The active-site Proton acceptor; for phosphorylation activity. Proton donor; for dephosphorylation activity is Asp-180. The interval 204-213 (MEIRGVGILD) is important for the catalytic mechanism of both phosphorylation and dephosphorylation. Glu-205 is a Mg(2+) binding site. The active site involves Arg-246. The interval 267 to 272 (PVKPGR) is important for the catalytic mechanism of dephosphorylation.

Belongs to the HPrK/P family. In terms of assembly, homohexamer. It depends on Mg(2+) as a cofactor.

The enzyme catalyses [HPr protein]-L-serine + ATP = [HPr protein]-O-phospho-L-serine + ADP + H(+). It catalyses the reaction [HPr protein]-O-phospho-L-serine + phosphate + H(+) = [HPr protein]-L-serine + diphosphate. Its function is as follows. Catalyzes the ATP- as well as the pyrophosphate-dependent phosphorylation of a specific serine residue in HPr, a phosphocarrier protein of the phosphoenolpyruvate-dependent sugar phosphotransferase system (PTS). HprK/P also catalyzes the pyrophosphate-producing, inorganic phosphate-dependent dephosphorylation (phosphorolysis) of seryl-phosphorylated HPr (P-Ser-HPr). The two antagonistic activities of HprK/P are regulated by several intracellular metabolites, which change their concentration in response to the absence or presence of rapidly metabolisable carbon sources (glucose, fructose, etc.) in the growth medium. Therefore, by controlling the phosphorylation state of HPr, HPrK/P is a sensor enzyme that plays a major role in the regulation of carbon metabolism and sugar transport: it mediates carbon catabolite repression (CCR), and regulates PTS-catalyzed carbohydrate uptake and inducer exclusion. In Peptoclostridium acidaminophilum (Eubacterium acidaminophilum), this protein is HPr kinase/phosphorylase.